A 1102-amino-acid chain; its full sequence is Centrosomal protein of 128 kDa (1102 aa).

Phosphoserine is present on residues S31, S248, and S290. 2 coiled-coil regions span residues 215 to 822 (VSDR…LETE) and 878 to 959 (EELK…ALQM). The disordered stretch occupies residues 326 to 346 (QHQVPCISKQPLSHQDDQGDD). 2 disordered regions span residues 991–1048 (SEKT…DHSR) and 1070–1102 (DPAS…KYKK). The segment covering 1009-1027 (QQRRDDTKPRIKSFRDDRP) has biased composition (basic and acidic residues). Composition is skewed to polar residues over residues 1039–1048 (HSSSCQDHSR) and 1076–1089 (GDTT…TSPQ). Residues 1090-1102 (SKKEEHEIKKYKK) are compositionally biased toward basic and acidic residues.

It is found in the cytoplasm. Its subcellular location is the cytoskeleton. The protein resides in the microtubule organizing center. The protein localises to the centrosome. It localises to the centriole. It is found in the spindle pole. The chain is Centrosomal protein of 128 kDa (Cep128) from Mus musculus (Mouse).